We begin with the raw amino-acid sequence, 384 residues long: Monomeric sarcosine oxidase (384 aa).

Residue Asp-6 to Phe-36 coordinates FAD. Residue Cys-315 is modified to S-8alpha-FAD cysteine.

The protein belongs to the MSOX/MTOX family. MSOX subfamily. As to quaternary structure, monomer. It depends on FAD as a cofactor.

The protein resides in the cytoplasm. The catalysed reaction is sarcosine + O2 + H2O = formaldehyde + glycine + H2O2. In terms of biological role, catalyzes the oxidative demethylation of sarcosine. In Streptomyces avermitilis (strain ATCC 31267 / DSM 46492 / JCM 5070 / NBRC 14893 / NCIMB 12804 / NRRL 8165 / MA-4680), this protein is Monomeric sarcosine oxidase.